A 487-amino-acid chain; its full sequence is Glutamate--tRNA ligase 2 (487 aa).

The 'HIGH' region motif lies at 31 to 41 (PSPTGHLHVGG). The 'KMSKS' region motif lies at 254-258 (PLSKR). Lys-257 lines the ATP pocket.

Belongs to the class-I aminoacyl-tRNA synthetase family. Glutamate--tRNA ligase type 1 subfamily. In terms of assembly, monomer.

It localises to the cytoplasm. The enzyme catalyses tRNA(Glu) + L-glutamate + ATP = L-glutamyl-tRNA(Glu) + AMP + diphosphate. Functionally, catalyzes the attachment of glutamate to tRNA(Glu) in a two-step reaction: glutamate is first activated by ATP to form Glu-AMP and then transferred to the acceptor end of tRNA(Glu). In Thermotoga maritima (strain ATCC 43589 / DSM 3109 / JCM 10099 / NBRC 100826 / MSB8), this protein is Glutamate--tRNA ligase 2.